Here is a 352-residue protein sequence, read N- to C-terminus: Sortase SrtE1 (352 aa).

2 stretches are compositionally biased toward basic and acidic residues: residues 1–10 (MTALRPERDS) and 34–45 (RYEESAAGEENR). Residues 1–132 (MTALRPERDS…RQARARKPGA (132 aa)) form a disordered region. The Cytoplasmic portion of the chain corresponds to 1–139 (MTALRPERDS…PGAAVVASRA (139 aa)). A required for protein stability region spans residues 15–79 (DQGSSYGQPY…TGPIGGGPDG (65 aa)). Gly residues predominate over residues 71-82 (GPIGGGPDGGGR). Basic residues predominate over residues 83–97 (AARRKAAKRRHGRRG). Residues 140-160 (IGEIFITTGVLMLLFVTYQLW) form a helical membrane-spanning segment. Over 161–352 (WTNVRAHAQA…SKGKPDALVS (192 aa)) the chain is Extracellular. Active-site residues include His251 and Cys320. Arg329 acts as the Proton donor in catalysis.

Belongs to the bacterial sortase family. Class E subfamily.

The protein localises to the cell membrane. It carries out the reaction The enzyme catalyzes a cell wall sorting reaction in which a surface protein with a sorting signal containing a LPXTG motif is cleaved between the Thr and Gly residue. The resulting threonine carboxyl end of the protein is covalently attached to a pentaglycine cross-bridge of peptidoglycan.. Transpeptidase that anchors surface proteins to the cell wall. Recognizes both Leu-Ala-x-Thr-Gly and Leu-Pro-x-Thr-Gly, with a preference for the former. Unlike the S.aureus sortase it cleaves not only the Thr-Gly motif but also the Ala-X bond; Ala-Glu and Ala-His bonds are better substrates than the Thr-Gly motif in vitro. Among its possible substrates are the chaplins ChpA, ChpB and ChpC; this enzyme is less important for ChpC attachment than is SrtE2. A double knockout mutant of srtE1 and srtE2 shows a developmental defect in aerial hyphae formation more dramatic than that due to chaplin deletion. In Streptomyces coelicolor (strain ATCC BAA-471 / A3(2) / M145), this protein is Sortase SrtE1.